The following is a 433-amino-acid chain: 23S rRNA (uracil(1939)-C(5))-methyltransferase RlmD (433 aa).

The TRAM domain maps to 10 to 68; the sequence is RTTTRQIITVSVNDLDSFGQGVARHNGKTLFIPGLLSQENAEVTVTEDKKQYARAKVVR. C81, C87, C90, and C162 together coordinate [4Fe-4S] cluster. Positions 265, 294, 299, 315, 342, and 363 each coordinate S-adenosyl-L-methionine. C389 acts as the Nucleophile in catalysis.

The protein belongs to the class I-like SAM-binding methyltransferase superfamily. RNA M5U methyltransferase family. RlmD subfamily.

The enzyme catalyses uridine(1939) in 23S rRNA + S-adenosyl-L-methionine = 5-methyluridine(1939) in 23S rRNA + S-adenosyl-L-homocysteine + H(+). Functionally, catalyzes the formation of 5-methyl-uridine at position 1939 (m5U1939) in 23S rRNA. The chain is 23S rRNA (uracil(1939)-C(5))-methyltransferase RlmD from Shigella dysenteriae serotype 1 (strain Sd197).